We begin with the raw amino-acid sequence, 145 residues long: Mannitol-specific phosphotransferase enzyme IIA component (145 aa).

The PTS EIIA type-2 domain occupies 2-145 (ENLTNISIEL…EEITENLAIA (144 aa)). His62 (tele-phosphohistidine intermediate) is an active-site residue. His62 carries the phosphohistidine; by HPr modification.

Its subcellular location is the cytoplasm. The phosphoenolpyruvate-dependent sugar phosphotransferase system (sugar PTS), a major carbohydrate active transport system, catalyzes the phosphorylation of incoming sugar substrates concomitantly with their translocation across the cell membrane. The enzyme II CmtAB PTS system is involved in D-mannitol transport. The protein is Mannitol-specific phosphotransferase enzyme IIA component of Enterococcus faecalis (strain ATCC 700802 / V583).